The following is a 404-amino-acid chain: Cysteine desulfurase IscS (404 aa).

Residues 75–76 (AT), Asn155, Gln183, and 203–205 (SGH) each bind pyridoxal 5'-phosphate. Position 206 is an N6-(pyridoxal phosphate)lysine (Lys206). Pyridoxal 5'-phosphate is bound at residue Thr243. Cys328 serves as the catalytic Cysteine persulfide intermediate. Cys328 lines the [2Fe-2S] cluster pocket.

It belongs to the class-V pyridoxal-phosphate-dependent aminotransferase family. NifS/IscS subfamily. In terms of assembly, homodimer. Forms a heterotetramer with IscU, interacts with other sulfur acceptors. The cofactor is pyridoxal 5'-phosphate.

The protein resides in the cytoplasm. The catalysed reaction is (sulfur carrier)-H + L-cysteine = (sulfur carrier)-SH + L-alanine. Its pathway is cofactor biosynthesis; iron-sulfur cluster biosynthesis. Its function is as follows. Master enzyme that delivers sulfur to a number of partners involved in Fe-S cluster assembly, tRNA modification or cofactor biosynthesis. Catalyzes the removal of elemental sulfur and selenium atoms from cysteine and selenocysteine to produce alanine. Functions as a sulfur delivery protein for Fe-S cluster synthesis onto IscU, an Fe-S scaffold assembly protein, as well as other S acceptor proteins. Also functions as a selenium delivery protein in the pathway for the biosynthesis of selenophosphate. In Salmonella typhi, this protein is Cysteine desulfurase IscS.